A 211-amino-acid polypeptide reads, in one-letter code: MADS-box protein AGL72 (211 aa).

In terms of domain architecture, MADS-box spans 1-61 (MVRGKIEIKK…GRLYEFASSD (61 aa)). Residues 88 to 187 (VQGLKKEMVT…LCQVGERPMG (100 aa)) enclose the K-box domain.

It is found in the nucleus. In terms of biological role, MADS-box transcription factor that acts with AGL42 and AGL71 in the control of flowering time. Promotes flowering at the shoot apical and axillary meristems. Seems to act through a gibberellin-dependent pathway. Interacts genetically with SOC1 and its expression is directly regulated by SOC1. In Arabidopsis thaliana (Mouse-ear cress), this protein is MADS-box protein AGL72 (AGL72).